The sequence spans 578 residues: E3 ubiquitin-protein ligase hrd-like protein 1 (578 aa).

The chain crosses the membrane as a helical span at residues 32-52; that stretch reads GYLALSLCVAFIASASVFTHF. A glycan (N-linked (GlcNAc...) asparagine) is linked at Asn68. 7 consecutive transmembrane segments (helical) span residues 76 to 96, 101 to 121, 134 to 154, 163 to 183, 202 to 222, 230 to 250, and 286 to 306; these read FGIN…HYIL, LIWV…KLII, VAAR…LSVV, VMPW…QFVT, SFIS…VSRF, PAVL…YILF, and FLSY…SIFF. An RING-type; atypical zinc finger spans residues 350–388; sequence CIVCWELLGTSRRLPCSHQFHDWCLMWWLAQDSSCPTCR. Positions 447–489 constitute a CUE domain; that stretch reads QLQSMLETVLEMFPQMSPETILADLRQSGSAQSTIENILEGRM. N-linked (GlcNAc...) asparagine glycosylation is present at Asn492.

It localises to the membrane. In terms of biological role, proposed to have a role in neuroprotection. This chain is E3 ubiquitin-protein ligase hrd-like protein 1, found in Caenorhabditis briggsae.